A 297-amino-acid chain; its full sequence is Large ribosomal subunit protein uL18 (297 aa).

Gly-2 is subject to N-acetylglycine. N6-acetyllysine occurs at positions 5 and 48. Ser-185 is subject to Phosphoserine. Lys-220 bears the N6-acetyllysine; alternate mark. Lys-220 participates in a covalent cross-link: Glycyl lysine isopeptide (Lys-Gly) (interchain with G-Cter in SUMO1); alternate. A Glycyl lysine isopeptide (Lys-Gly) (interchain with G-Cter in SUMO2); alternate cross-link involves residue Lys-220. Thr-232 carries the post-translational modification Phosphothreonine. Residues 253-297 (YEKKPKREVKKKRWNRPKMSLAQKKDRVAQKKASFLRAQERAAES) form a disordered region. A compositionally biased stretch (basic residues) spans 258 to 268 (KREVKKKRWNR). Ser-272 carries the post-translational modification Phosphoserine.

Belongs to the universal ribosomal protein uL18 family. In terms of assembly, component of the large ribosomal subunit (LSU). Part of the 5S RNP complex, which is a LSU subcomplex composed of the 5S RNA, RPL5 and RPL11. Component of a hexameric 5S RNP precursor complex, composed of 5S RNA, RRS1, RPF2/BXDC1, RPL5, RPL11 and HEATR3; this complex acts as a precursor for ribosome assembly. Interacts with isoform 1 of NVL in an ATP-dependent manner. Interacts with RRP1B. Interacts with IPO5, IPO7 and KPNB1; these interactions may be involved in RPL5 nuclear import for the assembly of ribosomal subunits.

The protein localises to the cytoplasm. Its subcellular location is the nucleus. It localises to the nucleolus. In terms of biological role, component of the ribosome, a large ribonucleoprotein complex responsible for the synthesis of proteins in the cell. The small ribosomal subunit (SSU) binds messenger RNAs (mRNAs) and translates the encoded message by selecting cognate aminoacyl-transfer RNA (tRNA) molecules. The large subunit (LSU) contains the ribosomal catalytic site termed the peptidyl transferase center (PTC), which catalyzes the formation of peptide bonds, thereby polymerizing the amino acids delivered by tRNAs into a polypeptide chain. The nascent polypeptides leave the ribosome through a tunnel in the LSU and interact with protein factors that function in enzymatic processing, targeting, and the membrane insertion of nascent chains at the exit of the ribosomal tunnel. As part of the 5S RNP/5S ribonucleoprotein particle it is an essential component of the LSU, required for its formation and the maturation of rRNAs. It also couples ribosome biogenesis to p53/TP53 activation. As part of the 5S RNP it accumulates in the nucleoplasm and inhibits MDM2, when ribosome biogenesis is perturbed, mediating the stabilization and the activation of TP53. This Oryctolagus cuniculus (Rabbit) protein is Large ribosomal subunit protein uL18 (RPL5).